The primary structure comprises 374 residues: Ribosomal RNA large subunit methyltransferase G (374 aa).

The protein belongs to the methyltransferase superfamily. RlmG family.

It localises to the cytoplasm. The enzyme catalyses guanosine(1835) in 23S rRNA + S-adenosyl-L-methionine = N(2)-methylguanosine(1835) in 23S rRNA + S-adenosyl-L-homocysteine + H(+). In terms of biological role, specifically methylates the guanine in position 1835 (m2G1835) of 23S rRNA. This Pseudomonas aeruginosa (strain ATCC 15692 / DSM 22644 / CIP 104116 / JCM 14847 / LMG 12228 / 1C / PRS 101 / PAO1) protein is Ribosomal RNA large subunit methyltransferase G.